The sequence spans 482 residues: Mannan endo-1,4-beta-mannosidase (482 aa).

The signal sequence occupies residues 1–21 (MARTLRYLLCGILALAAGSNA). The region spanning 42–160 (TTYEAEDAIL…WYLVDSITLT (119 aa)) is the CBM6 domain. Residues asparagine 171 and asparagine 300 are each glycosylated (N-linked (GlcNAc...) asparagine). In terms of domain architecture, GH26 spans 181–474 (ASARALYDYL…YTSDYVLTLD (294 aa)). The active-site Proton donor is glutamate 332. Catalysis depends on glutamate 422, which acts as the Nucleophile.

It belongs to the glycosyl hydrolase 26 family.

The protein resides in the secreted. The activity is completely impaired by Ag(+), partially inhibited by Zn(2+), and enhanced by Co(2+), Ni(2+) and Cu(2+) by 22.6, 14.5 and 20.8 %, respectively. Ca(2+), Na(+), Mg(2+), Mn(2+), urea and EDTA do not significantly affect the mannanase activity. Its function is as follows. Mannan endo-1,4-beta-mannosidase that exhibits high activity against konjac glucomannan and carob galactomannan, as well as a lower activity toward beta-mannan. Shows no activity against barley beta-glucan, birchwood xylan, and low viscosity carboxymethyl cellulose (CMC). Has the ability to hydrolyze manno-oligosaccharides such as M4 which is degraded slightly to M3 and M1, M5 which is mainly degraded to M4 and M1, and M6 which is mostly hydrolyzed to M4 and M2. Shows no activity toward M2 and M3 manno-oligosaccharides. This Thermothelomyces thermophilus (strain ATCC 42464 / BCRC 31852 / DSM 1799) (Sporotrichum thermophile) protein is Mannan endo-1,4-beta-mannosidase.